We begin with the raw amino-acid sequence, 443 residues long: F-box only protein 39 (443 aa).

The F-box domain maps to 16 to 61 (WATLPDVCLRRVFWWLGDRDRSRAALVCRKWNQMMYSADLWRYRTI).

In terms of assembly, directly interacts with SKP1 and CUL1.

Functionally, substrate-recognition component of the SCF (SKP1-CUL1-F-box protein)-type E3 ubiquitin ligase complex. The sequence is that of F-box only protein 39 (FBXO39) from Bos taurus (Bovine).